Here is a 237-residue protein sequence, read N- to C-terminus: Probable glutathione-independent glyoxalase HSP32 (237 aa).

Residues C138, H139, and E170 contribute to the active site.

This sequence belongs to the peptidase C56 family. HSP31-like subfamily. In terms of assembly, homodimer.

It is found in the cytoplasm. The protein localises to the P-body. The enzyme catalyses methylglyoxal + H2O = (R)-lactate + H(+). Its function is as follows. Catalyzes the conversion of methylglyoxal (MG) to D-lactate in a single glutathione (GSH)-independent step. May play a role in detoxifying endogenously produced glyoxals. Involved in protection against reactive oxygen species (ROS). Important for viability in stationary phase. May negatively regulate TORC1 in response to nutrient limitation. This chain is Probable glutathione-independent glyoxalase HSP32, found in Saccharomyces cerevisiae (strain ATCC 204508 / S288c) (Baker's yeast).